Reading from the N-terminus, the 345-residue chain is GTPase Obg (345 aa).

The 159-residue stretch at 1–159 folds into the Obg domain; it reads MHFLDQAKIF…MWVWLRLKLL (159 aa). A disordered region spans residues 121–142; the sequence is GDGGRGNASYKTSTNRAPRQHG. In terms of domain architecture, OBG-type G spans 160–327; that stretch reads ADCGLVGLPN…VLDKIIEILG (168 aa). Residues 166–173, 191–195, 212–215, 279–282, and 308–310 contribute to the GTP site; these read GLPNAGKS, FTTIR, DIPG, NKID, and SGA. Mg(2+) contacts are provided by Ser173 and Thr193.

The protein belongs to the TRAFAC class OBG-HflX-like GTPase superfamily. OBG GTPase family. As to quaternary structure, monomer. The cofactor is Mg(2+).

It localises to the cytoplasm. Functionally, an essential GTPase which binds GTP, GDP and possibly (p)ppGpp with moderate affinity, with high nucleotide exchange rates and a fairly low GTP hydrolysis rate. Plays a role in control of the cell cycle, stress response, ribosome biogenesis and in those bacteria that undergo differentiation, in morphogenesis control. The protein is GTPase Obg of Rhizorhabdus wittichii (strain DSM 6014 / CCUG 31198 / JCM 15750 / NBRC 105917 / EY 4224 / RW1) (Sphingomonas wittichii).